Here is a 187-residue protein sequence, read N- to C-terminus: Protein GrpE (187 aa).

Residues 1 to 31 (MEKKETKNDAEKNNKQDNKSTKSQKKENLNL) are disordered.

Belongs to the GrpE family. In terms of assembly, homodimer.

The protein resides in the cytoplasm. Its function is as follows. Participates actively in the response to hyperosmotic and heat shock by preventing the aggregation of stress-denatured proteins, in association with DnaK and GrpE. It is the nucleotide exchange factor for DnaK and may function as a thermosensor. Unfolded proteins bind initially to DnaJ; upon interaction with the DnaJ-bound protein, DnaK hydrolyzes its bound ATP, resulting in the formation of a stable complex. GrpE releases ADP from DnaK; ATP binding to DnaK triggers the release of the substrate protein, thus completing the reaction cycle. Several rounds of ATP-dependent interactions between DnaJ, DnaK and GrpE are required for fully efficient folding. In Borrelia garinii subsp. bavariensis (strain ATCC BAA-2496 / DSM 23469 / PBi) (Borreliella bavariensis), this protein is Protein GrpE.